Here is a 287-residue protein sequence, read N- to C-terminus: uncharacterized protein (287 aa).

This is an uncharacterized protein from Archaeoglobus fulgidus (strain ATCC 49558 / DSM 4304 / JCM 9628 / NBRC 100126 / VC-16).